A 225-amino-acid chain; its full sequence is tRNA (guanine-N(1)-)-methyltransferase (225 aa).

S-adenosyl-L-methionine is bound by residues Gly110 and 130-135 (VGDYVL).

This sequence belongs to the RNA methyltransferase TrmD family. In terms of assembly, homodimer.

It localises to the cytoplasm. It catalyses the reaction guanosine(37) in tRNA + S-adenosyl-L-methionine = N(1)-methylguanosine(37) in tRNA + S-adenosyl-L-homocysteine + H(+). Its function is as follows. Specifically methylates guanosine-37 in various tRNAs. The sequence is that of tRNA (guanine-N(1)-)-methyltransferase from Neorickettsia sennetsu (strain ATCC VR-367 / Miyayama) (Ehrlichia sennetsu).